Reading from the N-terminus, the 296-residue chain is Phosphatidylserine decarboxylase proenzyme (296 aa).

Residues Asp-113, His-169, and Ser-256 each act as charge relay system; for autoendoproteolytic cleavage activity in the active site. Ser-256 (schiff-base intermediate with substrate; via pyruvic acid; for decarboxylase activity) is an active-site residue. Ser-256 is subject to Pyruvic acid (Ser); by autocatalysis.

The protein belongs to the phosphatidylserine decarboxylase family. PSD-B subfamily. Prokaryotic type II sub-subfamily. In terms of assembly, heterodimer of a large membrane-associated beta subunit and a small pyruvoyl-containing alpha subunit. Pyruvate is required as a cofactor. Is synthesized initially as an inactive proenzyme. Formation of the active enzyme involves a self-maturation process in which the active site pyruvoyl group is generated from an internal serine residue via an autocatalytic post-translational modification. Two non-identical subunits are generated from the proenzyme in this reaction, and the pyruvate is formed at the N-terminus of the alpha chain, which is derived from the carboxyl end of the proenzyme. The autoendoproteolytic cleavage occurs by a canonical serine protease mechanism, in which the side chain hydroxyl group of the serine supplies its oxygen atom to form the C-terminus of the beta chain, while the remainder of the serine residue undergoes an oxidative deamination to produce ammonia and the pyruvoyl prosthetic group on the alpha chain. During this reaction, the Ser that is part of the protease active site of the proenzyme becomes the pyruvoyl prosthetic group, which constitutes an essential element of the active site of the mature decarboxylase.

The protein resides in the cell membrane. It carries out the reaction a 1,2-diacyl-sn-glycero-3-phospho-L-serine + H(+) = a 1,2-diacyl-sn-glycero-3-phosphoethanolamine + CO2. It participates in phospholipid metabolism; phosphatidylethanolamine biosynthesis; phosphatidylethanolamine from CDP-diacylglycerol: step 2/2. Its function is as follows. Catalyzes the formation of phosphatidylethanolamine (PtdEtn) from phosphatidylserine (PtdSer). In Clostridium botulinum (strain Eklund 17B / Type B), this protein is Phosphatidylserine decarboxylase proenzyme.